We begin with the raw amino-acid sequence, 188 residues long: Elongation factor P (188 aa).

It belongs to the elongation factor P family.

It localises to the cytoplasm. It participates in protein biosynthesis; polypeptide chain elongation. In terms of biological role, involved in peptide bond synthesis. Stimulates efficient translation and peptide-bond synthesis on native or reconstituted 70S ribosomes in vitro. Probably functions indirectly by altering the affinity of the ribosome for aminoacyl-tRNA, thus increasing their reactivity as acceptors for peptidyl transferase. This chain is Elongation factor P, found in Chlorobaculum parvum (strain DSM 263 / NCIMB 8327) (Chlorobium vibrioforme subsp. thiosulfatophilum).